Consider the following 419-residue polypeptide: Effector protein BipC (419 aa).

2 disordered regions span residues 62-94 (VAGSGAQRVELARPKPDAQTRATDRRTVSGLER) and 338-402 (LQSG…AKSQ). Basic and acidic residues-rich tracts occupy residues 71–94 (ELARPKPDAQTRATDRRTVSGLER) and 380–392 (TRDEAAHRSREAA).

It belongs to the SctB/SipC family.

Its subcellular location is the secreted. This chain is Effector protein BipC (bipC), found in Burkholderia pseudomallei (strain 1710b).